The following is a 344-amino-acid chain: Dihydroorotate dehydrogenase (quinone) (344 aa).

FMN-binding positions include 61 to 65 (AGLDK) and threonine 85. Lysine 65 is a substrate binding site. 110–114 (NRMGF) lines the substrate pocket. Asparagine 138 and asparagine 171 together coordinate FMN. Substrate is bound at residue asparagine 171. Catalysis depends on serine 174, which acts as the Nucleophile. Asparagine 176 lines the substrate pocket. FMN-binding residues include lysine 216 and threonine 244. 245-246 (NT) contacts substrate. FMN-binding positions include glycine 267, glycine 296, and 317 to 318 (YS).

This sequence belongs to the dihydroorotate dehydrogenase family. Type 2 subfamily. In terms of assembly, monomer. FMN is required as a cofactor.

Its subcellular location is the cell membrane. It catalyses the reaction (S)-dihydroorotate + a quinone = orotate + a quinol. It participates in pyrimidine metabolism; UMP biosynthesis via de novo pathway; orotate from (S)-dihydroorotate (quinone route): step 1/1. In terms of biological role, catalyzes the conversion of dihydroorotate to orotate with quinone as electron acceptor. In Psychrobacter sp. (strain PRwf-1), this protein is Dihydroorotate dehydrogenase (quinone).